A 227-amino-acid polypeptide reads, in one-letter code: MGYQLFEFENLEDCHKALIERFKEFFNAALKKHHQVSVAFSGGRSPISLLQKLSVLDLKWHECLISLVDERIIEASHEDSNAKLLHDYLLQNNALKASFTPLLPEKISGDTNELLDFANQHFKQPHLAILGMGTDGHTASLFPETSAFLNEEKENIVLTKPTNAPYERLSMSINALENCEKLFLSISGVEKRGVLEKALKENAPYSLPIARILHSKKVTTEVFYAKN.

It belongs to the glucosamine/galactosamine-6-phosphate isomerase family. 6-phosphogluconolactonase subfamily.

It catalyses the reaction 6-phospho-D-glucono-1,5-lactone + H2O = 6-phospho-D-gluconate + H(+). It functions in the pathway carbohydrate degradation; pentose phosphate pathway; D-ribulose 5-phosphate from D-glucose 6-phosphate (oxidative stage): step 2/3. In terms of biological role, hydrolysis of 6-phosphogluconolactone to 6-phosphogluconate. This chain is 6-phosphogluconolactonase (pgl), found in Helicobacter pylori (strain J99 / ATCC 700824) (Campylobacter pylori J99).